The primary structure comprises 692 residues: Elongation factor G (692 aa).

Residues E8–L282 form the tr-type G domain. Residues A17–T24, D81–H85, and N135–D138 contribute to the GTP site.

Belongs to the TRAFAC class translation factor GTPase superfamily. Classic translation factor GTPase family. EF-G/EF-2 subfamily.

It is found in the cytoplasm. Functionally, catalyzes the GTP-dependent ribosomal translocation step during translation elongation. During this step, the ribosome changes from the pre-translocational (PRE) to the post-translocational (POST) state as the newly formed A-site-bound peptidyl-tRNA and P-site-bound deacylated tRNA move to the P and E sites, respectively. Catalyzes the coordinated movement of the two tRNA molecules, the mRNA and conformational changes in the ribosome. The sequence is that of Elongation factor G from Geobacillus thermodenitrificans (strain NG80-2).